The primary structure comprises 238 residues: CD63 antigen (238 aa).

Residues 2-11 (AVEGGMKCVK) lie on the Cytoplasmic side of the membrane. Residues 12–32 (FLLYVLLLAFCACAVGLIAVG) form a helical membrane-spanning segment. Topologically, residues 33–51 (VGAQLVLSQTIIQGATPGS) are extracellular. A helical transmembrane segment spans residues 52 to 72 (LLPVVIIAVGVFLFLVAFVGC). The Cytoplasmic segment spans residues 73-81 (CGACKENYC). Residues 82–102 (LMITFAIFLSLIMLVEVAAAI) form a helical membrane-spanning segment. Topologically, residues 103–203 (AGYVFRDKVM…KIGGWLRKNV (101 aa)) are extracellular. N130, N150, and N172 each carry an N-linked (GlcNAc...) asparagine glycan. Residues 204–224 (LVVAAAALGIAFVEVLGIVFA) traverse the membrane as a helical segment. Residues 225-238 (CCLVKSIRSGYEVM) lie on the Cytoplasmic side of the membrane. Residues 234–238 (GYEVM) carry the Lysosomal targeting motif motif.

Belongs to the tetraspanin (TM4SF) family. As to quaternary structure, interacts with TIMP1 and ITGB1 and recruits TIMP1 to ITGB1. Interacts with CD9. Identified in a complex with CD9 and ITGB3. Interacts with PMEL. Interacts with KDR/VEGFR2; identified in a complex with ITGB1 and KDR/VEGFR2 and is required to recruit KDR to ITGB1 complexes. Interacts with SYT7. In terms of processing, palmitoylated at a low, basal level in unstimulated platelets. The level of palmitoylation increases when platelets are activated by thrombin (in vitro). Detected in platelets (at protein level). Dysplastic nevi, radial growth phase primary melanomas, hematopoietic cells, tissue macrophages.

It is found in the cell membrane. The protein resides in the lysosome membrane. It localises to the late endosome membrane. Its subcellular location is the endosome. The protein localises to the multivesicular body. It is found in the melanosome. The protein resides in the secreted. It localises to the extracellular exosome. Its subcellular location is the cell surface. Functionally, functions as a cell surface receptor for TIMP1 and plays a role in the activation of cellular signaling cascades. Plays a role in the activation of ITGB1 and integrin signaling, leading to the activation of AKT, FAK/PTK2 and MAP kinases. Promotes cell survival, reorganization of the actin cytoskeleton, cell adhesion, spreading and migration, via its role in the activation of AKT and FAK/PTK2. Plays a role in VEGFA signaling via its role in regulating the internalization of KDR/VEGFR2. Plays a role in intracellular vesicular transport processes, and is required for normal trafficking of the PMEL luminal domain that is essential for the development and maturation of melanocytes. Plays a role in the adhesion of leukocytes onto endothelial cells via its role in the regulation of SELP trafficking. May play a role in mast cell degranulation in response to Ms4a2/FceRI stimulation, but not in mast cell degranulation in response to other stimuli. The sequence is that of CD63 antigen (CD63) from Homo sapiens (Human).